The primary structure comprises 223 residues: Thymine-DNA glycosylase (223 aa).

[4Fe-4S] cluster contacts are provided by C201, C208, C211, and C217.

The protein belongs to the Nth/MutY family. The cofactor is [4Fe-4S] cluster.

It catalyses the reaction Hydrolyzes mismatched double-stranded DNA and polynucleotides, releasing free thymine.. With respect to regulation, thymine cleavage is completely inhibited by Ni(2+), Co(2+), Zn(2+), Cu(2+) and Mn(2+). Activity is not affected by Mg(2+) and Ca(2+). Functionally, DNA glycosylase that excises thymine from T/G mismatches. Also has a weak DNA glycosylase activity on uracil paired with various bases. The sequence is that of Thymine-DNA glycosylase from Aeropyrum pernix (strain ATCC 700893 / DSM 11879 / JCM 9820 / NBRC 100138 / K1).